Reading from the N-terminus, the 213-residue chain is MISNGQSRVKRLIQQLEALGITNKEVLRVISETPRHLFMPESLAHKAYENTALPIGNGQTISQPLMVATMTQLLMQHHCKNVLEIGTGSGYQTAVLAQLVDKVFSVERIATLQYQAKRRMRQLDLHNVAMRHGDGWKGWRSKGPFDGIIVTAAASDIPQDLVDQLADGGVMIIPVGEQHQSQSLVVMRRFGDSLEQQRIGDVRFVPLVKGDVV.

S62 is a catalytic residue.

Belongs to the methyltransferase superfamily. L-isoaspartyl/D-aspartyl protein methyltransferase family.

The protein resides in the cytoplasm. It catalyses the reaction [protein]-L-isoaspartate + S-adenosyl-L-methionine = [protein]-L-isoaspartate alpha-methyl ester + S-adenosyl-L-homocysteine. Its function is as follows. Catalyzes the methyl esterification of L-isoaspartyl residues in peptides and proteins that result from spontaneous decomposition of normal L-aspartyl and L-asparaginyl residues. It plays a role in the repair and/or degradation of damaged proteins. The chain is Protein-L-isoaspartate O-methyltransferase from Idiomarina loihiensis (strain ATCC BAA-735 / DSM 15497 / L2-TR).